The sequence spans 1790 residues: Atrochrysone carboxylic acid synthase (1790 aa).

Residues 27–265 (RDLQDLFRQA…ALPVYGGLCH (239 aa)) form an N-terminal acylcarrier protein transacylase domain (SAT) region. A Ketosynthase family 3 (KS3) domain is found at 399–833 (QSKLAIVGMS…GGNTTMILED (435 aa)). Catalysis depends on for beta-ketoacyl synthase activity residues Cys572, His708, and His751. The malonyl-CoA:ACP transacylase (MAT) domain stretch occupies residues 934-1254 (FSFTGQGASH…IAQLYTVGVD (321 aa)). The segment at 1323-1475 (QQIVEQVFDT…SLTHLVRDRI (153 aa)) is N-terminal hotdog fold. Positions 1323-1634 (QQIVEQVFDT…FHRYRRILLE (312 aa)) constitute a PKS/mFAS DH domain. His1357 (proton acceptor; for dehydratase activity) is an active-site residue. The product template (PT) domain stretch occupies residues 1357–1631 (HRMNDCGVAT…GIEFHRYRRI (275 aa)). A C-terminal hotdog fold region spans residues 1487–1634 (ANRLSHNMAY…FHRYRRILLE (148 aa)). Residue Asp1545 is the Proton donor; for dehydratase activity of the active site. The interval 1644–1667 (NLDDTTETKDISSSTQHSVPVSRQ) is disordered. Polar residues predominate over residues 1654–1664 (ISSSTQHSVPV). The 75-residue stretch at 1715–1789 (SSITNRAMQL…DLRNWLEETY (75 aa)) folds into the Carrier domain. Ser1749 bears the O-(pantetheine 4'-phosphoryl)serine mark.

It carries out the reaction holo-[ACP] + 8 malonyl-CoA + 8 H(+) = atrochrysone carboxyl-[ACP] + 8 CO2 + 8 CoA + 2 H2O. It functions in the pathway pigment biosynthesis. Functionally, non-reducing polyketide synthase; part of the gene cluster that mediates the biosynthesis of the bianthraquinone cladofulvin, a conidial pigment not required for virulence but that plays a role in fitness and resistance to environmental stresses including UV light and low-temperature stress. The pathway begins with the synthesis of atrochrysone thioester by the polyketide synthase (PKS) claG. The atrochrysone carboxyl ACP thioesterase claF then breaks the thioester bond and releases the atrochrysone carboxylic acid from claG. This compound is decarboxylated by claH to yield emodin, which is further converted to chrysophanol hydroquinone by the reductase claC and the dehydratase claB. The cytochrome P450 monooxygenase claM then catalyzes the dimerization of nataloe-emodin to cladofulvin. This is Atrochrysone carboxylic acid synthase from Passalora fulva (Tomato leaf mold).